We begin with the raw amino-acid sequence, 200 residues long: TATA-box-binding protein 1 (200 aa).

The residue at position 2 (Thr-2) is an N-acetylthreonine. 2 repeat units span residues 25 to 101 (LQNI…ARIV) and 115 to 192 (IQNI…YPVL).

It belongs to the TBP family. As to quaternary structure, belongs to the TFIID complex together with the TBP-associated factors (TAFs). Binds DNA as monomer. Interacts with TAF1 (via N-terminus). Interacts with MEE12/CCG1. Associates with PWP2 in the nucleus. Component of a nuclear protein complex containing at least TATA binding proteins (TBPs, e.g. TBP1 and TBP2) and ATX1.

The protein localises to the nucleus. Its function is as follows. General transcription factor that functions at the core of the DNA-binding multiprotein factor TFIID. Binding of TFIID to the TATA box is the initial transcriptional step of the pre-initiation complex (PIC), playing a role in the activation of eukaryotic genes transcribed by RNA polymerase II. The sequence is that of TATA-box-binding protein 1 from Arabidopsis thaliana (Mouse-ear cress).